Consider the following 21-residue polypeptide: Japonicin-2 (21 aa).

Cysteines 14 and 21 form a disulfide.

As to expression, expressed by the skin glands.

It localises to the secreted. Its function is as follows. Antibacterial activity against the Gram-negative bacterium E.coli and the Gram-positive bacterium S.aureus. The sequence is that of Japonicin-2 from Rana japonica (Japanese reddish frog).